The chain runs to 125 residues: Large ribosomal subunit protein bL20 (125 aa).

It belongs to the bacterial ribosomal protein bL20 family.

Functionally, binds directly to 23S ribosomal RNA and is necessary for the in vitro assembly process of the 50S ribosomal subunit. It is not involved in the protein synthesizing functions of that subunit. The protein is Large ribosomal subunit protein bL20 of Zymomonas mobilis subsp. mobilis (strain ATCC 31821 / ZM4 / CP4).